A 131-amino-acid polypeptide reads, in one-letter code: Agouti-signaling protein (131 aa).

The first 22 residues, methionine 1 to serine 22, serve as a signal peptide directing secretion. Residue asparagine 39 is glycosylated (N-linked (GlcNAc...) asparagine). The disordered stretch occupies residues lysine 58–arginine 96. Positions arginine 70–alanine 84 are enriched in basic residues. 5 disulfide bridges follow: cysteine 92-cysteine 107, cysteine 99-cysteine 113, cysteine 106-cysteine 124, cysteine 110-cysteine 131, and cysteine 115-cysteine 122. An Agouti domain is found at cysteine 92–cysteine 131.

Its subcellular location is the secreted. Functionally, involved in the regulation of melanogenesis. The binding of ASP to MC1R precludes alpha-MSH initiated signaling and thus blocks production of cAMP, leading to a down-regulation of eumelanogenesis (brown/black pigment) and thus increasing synthesis of pheomelanin (yellow/red pigment). The sequence is that of Agouti-signaling protein from Rattus norvegicus (Rat).